We begin with the raw amino-acid sequence, 160 residues long: Small ribosomal subunit protein uS7 (160 aa).

This sequence belongs to the universal ribosomal protein uS7 family. Part of the 30S ribosomal subunit. Contacts proteins S9 and S11.

Functionally, one of the primary rRNA binding proteins, it binds directly to 16S rRNA where it nucleates assembly of the head domain of the 30S subunit. Is located at the subunit interface close to the decoding center, probably blocks exit of the E-site tRNA. The polypeptide is Small ribosomal subunit protein uS7 (Anaplasma phagocytophilum (strain HZ)).